We begin with the raw amino-acid sequence, 176 residues long: Large ribosomal subunit protein uL22 (176 aa).

Residues Val-113 to Asp-176 form a disordered region. Over residues Ser-136–Ala-152 the composition is skewed to low complexity. Basic and acidic residues predominate over residues Thr-159–Asp-176.

This sequence belongs to the universal ribosomal protein uL22 family. As to quaternary structure, part of the 50S ribosomal subunit.

In terms of biological role, this protein binds specifically to 23S rRNA; its binding is stimulated by other ribosomal proteins, e.g. L4, L17, and L20. It is important during the early stages of 50S assembly. It makes multiple contacts with different domains of the 23S rRNA in the assembled 50S subunit and ribosome. The globular domain of the protein is located near the polypeptide exit tunnel on the outside of the subunit, while an extended beta-hairpin is found that lines the wall of the exit tunnel in the center of the 70S ribosome. This Mycobacterium ulcerans (strain Agy99) protein is Large ribosomal subunit protein uL22.